Consider the following 618-residue polypeptide: NAD(P)H-quinone oxidoreductase subunit 5, organellar chromatophore 2 (618 aa).

Helical transmembrane passes span 16 to 36 (LIPI…TGWI), 43 to 63 (TPAY…SLAL), 99 to 119 (LAAL…ALGY), 129 to 149 (FFAL…SDSL), 152 to 172 (SYFL…FWYA), 190 to 210 (GDVM…GMEF), 220 to 240 (NTLT…GPIG), 267 to 287 (SVVV…LHHS), 291 to 311 (IAVL…VSIA), 318 to 335 (TLSY…IAIA), 348 to 368 (AHAI…AVSN), 390 to 410 (LIAG…CFGL), 419 to 438 (APWF…LNLT), 461 to 481 (WQMA…PWMM), 495 to 515 (AITG…GAIV), 553 to 573 (IVSG…NGFV), and 597 to 617 (SYIL…SWLV).

Belongs to the complex I subunit 5 family. In terms of assembly, NDH is composed of at least 16 different subunits, 5 of which are encoded in the nucleus.

The protein resides in the plastid. It is found in the organellar chromatophore thylakoid membrane. It catalyses the reaction a plastoquinone + NADH + (n+1) H(+)(in) = a plastoquinol + NAD(+) + n H(+)(out). It carries out the reaction a plastoquinone + NADPH + (n+1) H(+)(in) = a plastoquinol + NADP(+) + n H(+)(out). Its function is as follows. NDH shuttles electrons from NAD(P)H:plastoquinone, via FMN and iron-sulfur (Fe-S) centers, to quinones in the photosynthetic chain and possibly in a chloroplast respiratory chain. The immediate electron acceptor for the enzyme in this species is believed to be plastoquinone. Couples the redox reaction to proton translocation, and thus conserves the redox energy in a proton gradient. This chain is NAD(P)H-quinone oxidoreductase subunit 5, organellar chromatophore 2 (ndhF2), found in Paulinella chromatophora.